The chain runs to 449 residues: Putative F-box/LRR-repeat protein At3g44090 (449 aa).

Residues 23–77 form the F-box domain; the sequence is LASMDCLPDDLLVQILYFLPTKEAISTSLLSKRWRTLYSLVHNLDLDDYIFWHHE. 6 LRR repeats span residues 133–163, 186–212, 214–231, 247–278, 286–311, and 320–345; these read YYNLQKDSLWQFGFPYKVFTSTKLVKLSLGT, YIWFEDNQLSDVFLAACPALEDLTIHH, FRPFLISSKNLKKLSVTI, TPNVVDLYYSDFPRPIAPHCHLDSLAKVELDL, RQVQNDADVKNLISEIRNVKTLHLTY, and SKKRDWKVLPLLLERSPNLKTLVLSG.

This Arabidopsis thaliana (Mouse-ear cress) protein is Putative F-box/LRR-repeat protein At3g44090.